A 151-amino-acid polypeptide reads, in one-letter code: SsrA-binding protein (151 aa).

The protein belongs to the SmpB family.

Its subcellular location is the cytoplasm. Its function is as follows. Required for rescue of stalled ribosomes mediated by trans-translation. Binds to transfer-messenger RNA (tmRNA), required for stable association of tmRNA with ribosomes. tmRNA and SmpB together mimic tRNA shape, replacing the anticodon stem-loop with SmpB. tmRNA is encoded by the ssrA gene; the 2 termini fold to resemble tRNA(Ala) and it encodes a 'tag peptide', a short internal open reading frame. During trans-translation Ala-aminoacylated tmRNA acts like a tRNA, entering the A-site of stalled ribosomes, displacing the stalled mRNA. The ribosome then switches to translate the ORF on the tmRNA; the nascent peptide is terminated with the 'tag peptide' encoded by the tmRNA and targeted for degradation. The ribosome is freed to recommence translation, which seems to be the essential function of trans-translation. The chain is SsrA-binding protein from Campylobacter fetus subsp. fetus (strain 82-40).